Here is a 70-residue protein sequence, read N- to C-terminus: DNA-directed RNA polymerase subunit epsilon (70 aa).

The protein belongs to the RNA polymerase subunit epsilon family. RNAP is composed of a core of 2 alpha, a beta and a beta' subunit. The core is associated with a delta subunit, and at least one of epsilon or omega. When a sigma factor is associated with the core the holoenzyme is formed, which can initiate transcription.

It carries out the reaction RNA(n) + a ribonucleoside 5'-triphosphate = RNA(n+1) + diphosphate. In terms of biological role, a non-essential component of RNA polymerase (RNAP). The sequence is that of DNA-directed RNA polymerase subunit epsilon from Latilactobacillus sakei subsp. sakei (strain 23K) (Lactobacillus sakei subsp. sakei).